Reading from the N-terminus, the 473-residue chain is Protein translocase subunit SecA (473 aa).

Asp-127 is a binding site for ATP. The segment at 424 to 447 (VAEGKAVHQDTSKQEPKKKQPIRK) is disordered. Zn(2+) contacts are provided by Cys-457, Cys-459, Cys-468, and Cys-469.

Belongs to the SecA family. In terms of assembly, monomer and homodimer. Part of the essential Sec protein translocation apparatus which comprises SecA, SecYEG and auxiliary proteins SecDF. Other proteins may also be involved. The cofactor is Zn(2+).

Its subcellular location is the cell membrane. It localises to the cytoplasm. The enzyme catalyses ATP + H2O + cellular proteinSide 1 = ADP + phosphate + cellular proteinSide 2.. Part of the Sec protein translocase complex. Interacts with the SecYEG preprotein conducting channel. Has a central role in coupling the hydrolysis of ATP to the transfer of proteins into and across the cell membrane, serving as an ATP-driven molecular motor driving the stepwise translocation of polypeptide chains across the membrane. The polypeptide is Protein translocase subunit SecA (Cytobacillus firmus (Bacillus firmus)).